Consider the following 352-residue polypeptide: MDRTKTRFRKRGQITGKITTSRQPHPQNEQSLQRSTSGYPLQEVVDDEVLGPSAPGVDPSPPCRSLGWKRKKEWSDESEEEPEKELAPEPEETWVVEMLCGLKMKLKQQRVSPILPEHHKDFNSQLAPGVDPSPPHRSFCWKRKREWWDESEESLEEEPRKVLAPEPEEIWVAEMLCGLKMKLKRRRVSLVLPEHHEAFNRLLEDPVIKRFLAWDKDLRVSDKYLLAMVIAYFSRAGLPSWQYQRIHFFLALYLANDMEEDDEDPKQNIFYFLYGKTRSRIPLVRNRRFQLCRCLNPRARKNRSQIALFQKLRFQFFCSMSGRAWVSREELEEIQAYDPEHWVWARDRARLS.

Positions 1-12 are enriched in basic residues; the sequence is MDRTKTRFRKRG. Residues 1 to 90 are disordered; that stretch reads MDRTKTRFRK…EPEKELAPEP (90 aa). Residues 16-39 are compositionally biased toward polar residues; that stretch reads GKITTSRQPHPQNEQSLQRSTSGY. Positions 76–90 are enriched in acidic residues; that stretch reads DESEEEPEKELAPEP.

Belongs to the Speedy/Ringo family.

The chain is Speedy protein E18 from Homo sapiens (Human).